Here is a 448-residue protein sequence, read N- to C-terminus: MGRMFGTDGVRGVANTELTARIAYDLGRAGAYVLTEGAHKPKILVAKDTRISGDMLESALIAGILSVGAEAIVLGVVPTPAVAYLTRKYGADAGVMISASHNPVEYNGIKFFNDKGYKLSDELEDEIQRVIESDFEGVPSPTGTDLGRETIEVSALDDYIEFAKNTIPYSLKGLKIALDCANGAAYKSSVKAFRELGADVFVINDNPDGTNINENCGSTHPEELMEYVIKKKCDLGFAFDGDADRCLAVDEKGNLINGDFILMLCAKYLKELGKLKDDTLVVTVMSNLGLDIACKNEKINIVKTAVGDRYVLEEMVKNKYVLGGEQSGHVIFLDYNSTGDGLVTALQIAGIVKKKEKALSELCSIMKELPQVLANATIPNDKKDLYLTDDEIQNEIRKIEEALNGVGRVLIRPSGTEPLVRVMLEGENQAEIDEMAHNLANLIEKKYN.

Residue serine 100 is the Phosphoserine intermediate of the active site. The Mg(2+) site is built by serine 100, aspartate 240, aspartate 242, and aspartate 244. Serine 100 bears the Phosphoserine mark.

The protein belongs to the phosphohexose mutase family. The cofactor is Mg(2+). In terms of processing, activated by phosphorylation.

The catalysed reaction is alpha-D-glucosamine 1-phosphate = D-glucosamine 6-phosphate. In terms of biological role, catalyzes the conversion of glucosamine-6-phosphate to glucosamine-1-phosphate. This chain is Phosphoglucosamine mutase, found in Clostridium beijerinckii (strain ATCC 51743 / NCIMB 8052) (Clostridium acetobutylicum).